A 495-amino-acid chain; its full sequence is Glucose-6-phosphate 1-dehydrogenase (495 aa).

The residue at position 1 (S1) is an N-acetylserine. NADP(+) is bound by residues 15 to 22 (GASGDLAR), R49, and K149. D-glucose 6-phosphate is bound by residues K149, 179-183 (HYLGK), E217, and D236. Residue H241 is the Proton acceptor of the active site. NADP(+) is bound at residue R332. K335 contributes to the D-glucose 6-phosphate binding site. NADP(+) contacts are provided by K341, R345, and R367. Residue Q369 coordinates D-glucose 6-phosphate. NADP(+)-binding positions include 375–377 (YLK), 395–397 (DLT), and K463.

This sequence belongs to the glucose-6-phosphate dehydrogenase family.

The catalysed reaction is D-glucose 6-phosphate + NADP(+) = 6-phospho-D-glucono-1,5-lactone + NADPH + H(+). The protein operates within carbohydrate degradation; pentose phosphate pathway; D-ribulose 5-phosphate from D-glucose 6-phosphate (oxidative stage): step 1/3. Functionally, catalyzes the rate-limiting step of the oxidative pentose-phosphate pathway, which represents a route for the dissimilation of carbohydrates besides glycolysis. The main function of this enzyme is to provide reducing power (NADPH) and pentose phosphates for fatty acid and nucleic acid synthesis. This is Glucose-6-phosphate 1-dehydrogenase from Cyberlindnera jadinii (Torula yeast).